The primary structure comprises 137 residues: uncharacterized protein (137 aa).

Residues 5-136 (NRHLIHQINQ…FSHLFRMFLQ (132 aa)) enclose the HTH marR-type domain. Positions 51–74 (QKEIWSYLNVEAPTVTRTIKRLEE) form a DNA-binding region, H-T-H motif.

This is an uncharacterized protein from Bacillus subtilis (strain 168).